Reading from the N-terminus, the 525-residue chain is MALRRLLLPPLLLSLLLSLASLHLPPGADAARGRSGNRTLNAGAVGGRRAGGALARGGRELNSTARASGVPEAGSRRGQSAAAAAAAAAAASATVTYETCWGYYDVSGQYDKEFECNNSESGYLYCCGTCYYRFCCKKRHEKLDQRQCTNYQSPVWVQTPSTKVVSPGPENKYDPEKDKTNFTVYITCGVIAFVIVAGVFAKVSYDKAHRPPREMNIHRALADILRQQGPIPIAHCERETISAIDTSPKENTPVRSTSKNHYTPVRTAKQTPGDRQYNHPILSSATQTPTHEKPRMNNILTSATEPYDLSFSRSYQNLAHLPPSYESAVKTNPSKYSSLKRLTDKEADEYYMRRRHLPDLAARGTLPLNVIQMSQQKPLPRERPRRPIRAMSQDRVLSPRRGLPDEFGMPYDRILSDEQLLSTERLHSQDPLLSPERTAFPEQSLSRAISHTDVFVSTPVLDRYRMTKMHSHPSASNNSYATLGQSQTAAKRHAFASRRHNTVEQLHYIPGHHTCYTASKTEVTV.

The signal sequence occupies residues 1–30 (MALRRLLLPPLLLSLLLSLASLHLPPGADA). The Extracellular portion of the chain corresponds to 31-180 (ARGRSGNRTL…NKYDPEKDKT (150 aa)). 2 N-linked (GlcNAc...) asparagine glycosylation sites follow: asparagine 37 and asparagine 62. Residues 181-201 (NFTVYITCGVIAFVIVAGVFA) traverse the membrane as a helical segment. The Cytoplasmic segment spans residues 202 to 525 (KVSYDKAHRP…YTASKTEVTV (324 aa)). A disordered region spans residues 241 to 294 (ISAIDTSPKENTPVRSTSKNHYTPVRTAKQTPGDRQYNHPILSSATQTPTHEKP). Over residues 243–261 (AIDTSPKENTPVRSTSKNH) the composition is skewed to polar residues. Phosphoserine is present on residues serine 416, serine 422, and serine 434. Threonine 458 is modified (phosphothreonine). Residues 469–495 (MHSHPSASNNSYATLGQSQTAAKRHAF) form a disordered region. Over residues 473–489 (PSASNNSYATLGQSQTA) the composition is skewed to polar residues. Phosphothreonine is present on threonine 502. The PDZ-binding motif lies at 522 to 525 (EVTV).

The protein belongs to the shisa family. In terms of assembly, component of the postsynaptic hippocampal AMPA-type glutamate receptor (AMPAR) complex, at least composed of pore forming AMPAR subunits GRIA1, GRIA2 and GRIA3 and AMPAR auxiliary proteins SHISA6 and SHISA7. Interacts (via PDZ-binding motif) with DLG4/PSD-95 (via PDZ domain); the interaction is direct. Post-translationally, N-glycosylated. In terms of tissue distribution, highly expressed in cerebellum and hippocampal neurons: CA1 stratum oriens and stratum radiatum, CA3 stratum oriens and stratum lucidum, and the dentate gyrus polymorphic layer. Expressed in other brain structures including olfactory bulb, cortex, amygdala and midbrain (at protein level). Also expressed in a subset of spermatogonial stem cells. Also expressed in eye, heart, kidney, lung, muscle and spleen. Isoform 2: Specifically expressed in hippocampus.

The protein resides in the postsynaptic density membrane. Involved in maintenance of high-frequency synaptic transmission at hippocampal CA3-CA1 synapses. Regulates AMPA-type glutamate receptor (AMPAR) immobilization at postsynaptic density keeping the channels in an activated state in the presence of glutamate and preventing synaptic depression. May play a role in self-renewal and differentiation of spermatogonial stem cells by inhibiting canonical Wnt signaling pathway. This Mus musculus (Mouse) protein is Protein shisa-6.